A 507-amino-acid chain; its full sequence is Probable allantoinase (507 aa).

Zn(2+)-binding residues include His-105, His-107, Lys-195, His-231, His-294, and Asp-368. Lys-195 carries the N6-carboxylysine modification.

This sequence belongs to the metallo-dependent hydrolases superfamily. Allantoinase family. As to quaternary structure, homotetramer. It depends on Zn(2+) as a cofactor. Carboxylation allows a single lysine to coordinate two zinc ions.

It catalyses the reaction (S)-allantoin + H2O = allantoate + H(+). It participates in nitrogen metabolism; (S)-allantoin degradation; allantoate from (S)-allantoin: step 1/1. Catalyzes the conversion of allantoin (5-ureidohydantoin) to allantoate by hydrolytic cleavage of the five-member hydantoin ring. Catalyzes the first step of the ureide allantoin degradation followed by the sequential activity of AAH, UGLYAH and UAH which allows a complete purine breakdown without the intermediate generation of urea. The polypeptide is Probable allantoinase (ALN) (Oryza sativa subsp. japonica (Rice)).